Reading from the N-terminus, the 106-residue chain is Toxin-like structure LSTX-D4 (106 aa).

A signal peptide spans 1–20 (MMKVLVVVALLVTLISYSSS). Residues 21–41 (EGIGDLEADELLSLMANEQTR) constitute a propeptide that is removed on maturation. Cystine bridges form between C45/C60, C52/C69, C59/C85, and C71/C83.

Belongs to the neurotoxin 19 (CSTX) family. 02 (D7) subfamily. Expressed by the venom gland.

It localises to the secreted. The chain is Toxin-like structure LSTX-D4 from Lycosa singoriensis (Wolf spider).